We begin with the raw amino-acid sequence, 380 residues long: cAMP-dependent protein kinase type I-alpha regulatory subunit (380 aa).

Methionine 1 carries the post-translational modification N-acetylmethionine. Alanine 2 is subject to N-acetylalanine; in cAMP-dependent protein kinase type I-alpha regulatory subunit, N-terminally processed. Residues alanine 2–valine 135 are dimerization and phosphorylation. Phosphoserine occurs at positions 3, 76, and 82. The tract at residues isoleucine 64–arginine 96 is disordered. Positions arginine 95–isoleucine 99 match the Pseudophosphorylation motif motif. Serine 100 carries the phosphoserine modification. 3',5'-cyclic AMP contacts are provided by residues leucine 136–serine 253, glutamate 201, arginine 210, isoleucine 254–valine 380, glutamate 325, and arginine 334. Serine 257 bears the Phosphoserine mark.

Belongs to the cAMP-dependent kinase regulatory chain family. The inactive holoenzyme is composed of two regulatory chains and two catalytic chains. Activation by cAMP releases the two active catalytic monomers and the regulatory dimer. Interacts with PRKACA and PRKACB. PRKAR1A also interacts with RFC2; the complex may be involved in cell survival. Interacts with AKAP4. Interacts with RARA; the interaction occurs in the presence of cAMP or FSH and regulates RARA transcriptional activity. Interacts with the phosphorylated form of PJA2. Interacts with CBFA2T3. Interacts with PRKX; regulates this cAMP-dependent protein kinase. Interacts with smAKAP; this interaction may target PRKAR1A to the plasma membrane. Interacts with AICDA. The pseudophosphorylation site binds to the substrate-binding region of the catalytic chain, resulting in the inhibition of its activity. The physiological significance of the in vitro phosphorylation of a proximal serine is unclear. In terms of tissue distribution, four types of regulatory chains are found: I-alpha, I-beta, II-alpha, and II-beta. Their expression varies among tissues and is in some cases constitutive and in others inducible.

Its subcellular location is the cell membrane. Functionally, regulatory subunit of the cAMP-dependent protein kinases involved in cAMP signaling in cells. This chain is cAMP-dependent protein kinase type I-alpha regulatory subunit (PRKAR1A), found in Bos taurus (Bovine).